We begin with the raw amino-acid sequence, 83 residues long: Alpha-conotoxin QcIA (83 aa).

Positions 1-21 (MGMRMMFTLFLLAVLSTTVVS) are cleaved as a signal peptide. A propeptide spanning residues 22–48 (FTLDRASNGRDAAADSKAADQIAQTVR) is cleaved from the precursor. 2 cysteine pairs are disulfide-bonded: cysteine 51–cysteine 57 and cysteine 52–cysteine 65. The tract at residues 53–55 (SNP) is ser-Xaa-Pro motif, crucial for potent interaction with nAChR. Residues 66–83 (RRTLMLQNPLNHDMSPSA) constitute a propeptide that is removed on maturation.

This sequence belongs to the conotoxin A superfamily. As to expression, expressed by the venom duct.

It is found in the secreted. In terms of biological role, alpha-conotoxins bind to the nicotinic acetylcholine receptors (nAChR) and inhibit them. A synthetic amidated version of this toxin potently and preferentially antagonizes neuronal rat alpha-3-beta-2 (IC(50)=55.7 nM) and alpha-6/alpha-3-beta-4 (IC(50)=90.69 nM) nAChRs. The protein is Alpha-conotoxin QcIA of Conus quercinus (Oak cone).